Consider the following 217-residue polypeptide: Large ribosomal subunit protein uL3 (217 aa).

The protein belongs to the universal ribosomal protein uL3 family. As to quaternary structure, part of the 50S ribosomal subunit. Forms a cluster with proteins L14 and L19.

In terms of biological role, one of the primary rRNA binding proteins, it binds directly near the 3'-end of the 23S rRNA, where it nucleates assembly of the 50S subunit. The polypeptide is Large ribosomal subunit protein uL3 (Mycolicibacterium paratuberculosis (strain ATCC BAA-968 / K-10) (Mycobacterium paratuberculosis)).